A 351-amino-acid chain; its full sequence is Large ribosomal subunit protein uL3 (351 aa).

2 disordered regions span residues 1 to 31 and 246 to 271; these read MGHR…TPRT and KGSR…GQLG.

Belongs to the universal ribosomal protein uL3 family. Part of the 50S ribosomal subunit. Forms a cluster with proteins L14 and L24e.

Its function is as follows. One of the primary rRNA binding proteins, it binds directly near the 3'-end of the 23S rRNA, where it nucleates assembly of the 50S subunit. This is Large ribosomal subunit protein uL3 from Saccharolobus islandicus (strain M.16.27) (Sulfolobus islandicus).